The sequence spans 381 residues: MTTSTGKINLLGLTQPEMEQFFDSIGEKRFRAGQVMKWIHHFGVSDFAAMTNVGKVLREKLEAVAEIRPPEVVSEDISADGTRKWVIRVASGSCVETVYIPTDDRGTLCVSSQAGCALDCSFCSTGKQGFNSNLTAAEVIGQVWLANKSFGTVPAKVDRAITNVVMMGMGEPLLNFDNVIAAMKIMMDDLGYGISKRRVTLSTSGVVPMIDELAKHIDVSLALSLHAPNDELRNKLVPINKKYPLKVLLESCMGYMSTLGGKRVLTVEYTLLKDVNDQPEHAAQMIELLRDVPCKINLIPFNPFPHSGYERPSNNAIRRFQDLLHHGGFNVTTRTTRGDDIDAACGQLVGQVNDRTRRSERYIAVRQLSADVELPDSAASH.

Glu96 acts as the Proton acceptor in catalysis. Residues 102–342 enclose the Radical SAM core domain; it reads TDDRGTLCVS…TRTTRGDDID (241 aa). A disulfide bridge links Cys109 with Cys345. [4Fe-4S] cluster is bound by residues Cys116, Cys120, and Cys123. Residues 170-171, Ser202, 224-226, and Asn302 contribute to the S-adenosyl-L-methionine site; these read GE and SLH. Catalysis depends on Cys345, which acts as the S-methylcysteine intermediate.

It belongs to the radical SAM superfamily. RlmN family. It depends on [4Fe-4S] cluster as a cofactor.

Its subcellular location is the cytoplasm. It carries out the reaction adenosine(2503) in 23S rRNA + 2 reduced [2Fe-2S]-[ferredoxin] + 2 S-adenosyl-L-methionine = 2-methyladenosine(2503) in 23S rRNA + 5'-deoxyadenosine + L-methionine + 2 oxidized [2Fe-2S]-[ferredoxin] + S-adenosyl-L-homocysteine. The enzyme catalyses adenosine(37) in tRNA + 2 reduced [2Fe-2S]-[ferredoxin] + 2 S-adenosyl-L-methionine = 2-methyladenosine(37) in tRNA + 5'-deoxyadenosine + L-methionine + 2 oxidized [2Fe-2S]-[ferredoxin] + S-adenosyl-L-homocysteine. Specifically methylates position 2 of adenine 2503 in 23S rRNA and position 2 of adenine 37 in tRNAs. m2A2503 modification seems to play a crucial role in the proofreading step occurring at the peptidyl transferase center and thus would serve to optimize ribosomal fidelity. In Pseudomonas putida (strain ATCC 700007 / DSM 6899 / JCM 31910 / BCRC 17059 / LMG 24140 / F1), this protein is Dual-specificity RNA methyltransferase RlmN.